Here is a 649-residue protein sequence, read N- to C-terminus: Sulfate transporter 1.1 (649 aa).

The segment at 1-20 is disordered; it reads MSGTINPPDGGGSGARNPPV. Residues 1 to 86 lie on the Cytoplasmic side of the membrane; sequence MSGTINPPDG…AREYTLRKFR (86 aa). A helical transmembrane segment spans residues 87–107; it reads GDLIAGLTIASLCIPQDIGYA. Residues 108 to 111 lie on the Extracellular side of the membrane; it reads KLAN. A helical membrane pass occupies residues 112 to 132; the sequence is VDPKYGLYSSFVPPLIYAGMG. Residues 133–136 lie on the Cytoplasmic side of the membrane; the sequence is SSRD. Residues 137-157 traverse the membrane as a helical segment; sequence IAIGPVAVVSLLVGTLCQAVI. At 158–168 the chain is on the extracellular side; it reads DPKKNPEDYLR. Helical transmembrane passes span 169–189 and 190–210; these read LVFT…FLRL and GFLI…GAAI. At 211-248 the chain is on the extracellular side; the sequence is TIALQQLKGFLGIKTFTKKTDIVSVMHSVFKNAEHGWN. Residues 249–269 traverse the membrane as a helical segment; the sequence is WQTIVIGASFLTFLLVTKFIG. Over 270–275 the chain is Cytoplasmic; it reads KRNRKL. The chain crosses the membrane as a helical span at residues 276–296; sequence FWVPAIAPLISVIISTFFVFI. Over 297–334 the chain is Extracellular; it reads FRADKQGVQIVKHIDQGINPISVHKIFFSGKYFTEGIR. A helical membrane pass occupies residues 335-355; that stretch reads IGGIAGMVALTEAVAIARTFA. Residues 356–367 lie on the Cytoplasmic side of the membrane; the sequence is AMKDYQIDGNKE. Residues 368 to 388 form a helical membrane-spanning segment; that stretch reads MIALGTMNVVGSMTSCYIATG. Topologically, residues 389-404 are extracellular; the sequence is SFSRSAVNFMAGVETA. Residues 405–425 traverse the membrane as a helical segment; the sequence is VSNIVMAIVVALTLEFITPLF. Over 426-431 the chain is Cytoplasmic; the sequence is KYTPNA. The chain crosses the membrane as a helical span at residues 432-452; sequence ILAAIIISAVLGLIDIDAAIL. Over 453–465 the chain is Extracellular; the sequence is IWRIDKLDFLACM. Residues 466–486 form a helical membrane-spanning segment; that stretch reads GAFLGVIFISVEIGLLIAVVI. Over 487–649 the chain is Cytoplasmic; it reads SFAKILLQVT…CSTEVAEQQT (163 aa). In terms of domain architecture, STAS spans 517-640; the sequence is QYPDAAQIPG…LTVGDAVAVC (124 aa).

Belongs to the SLC26A/SulP transporter (TC 2.A.53) family. Interacts with OASA1 through its STAS domain. As to expression, expressed in lateral root cap, root hairs, epidermal and cortical cells of roots.

The protein localises to the membrane. High-affinity H(+)/sulfate cotransporter that mediates the uptake of the environmental sulfate by plant roots under low-sulfur conditions. Plays a central role in the regulation of sulfate assimilation. In Arabidopsis thaliana (Mouse-ear cress), this protein is Sulfate transporter 1.1 (SULTR1;1).